The sequence spans 361 residues: Phenylalanine--tRNA ligase alpha subunit (361 aa).

A Mg(2+)-binding site is contributed by Glu-260.

The protein belongs to the class-II aminoacyl-tRNA synthetase family. Phe-tRNA synthetase alpha subunit type 1 subfamily. Tetramer of two alpha and two beta subunits. Mg(2+) serves as cofactor.

It localises to the cytoplasm. The enzyme catalyses tRNA(Phe) + L-phenylalanine + ATP = L-phenylalanyl-tRNA(Phe) + AMP + diphosphate + H(+). This is Phenylalanine--tRNA ligase alpha subunit from Allorhizobium ampelinum (strain ATCC BAA-846 / DSM 112012 / S4) (Agrobacterium vitis (strain S4)).